Here is a 327-residue protein sequence, read N- to C-terminus: 2-keto-3-deoxygluconate permease (327 aa).

Transmembrane regions (helical) follow at residues 10-30, 42-62, 73-93, 95-115, 139-159, 163-183, 199-219, 224-244, 254-274, and 289-309; these read IPGG…TFSP, GMIT…GASI, KSGT…AIAS, IIPE…LALV, AGAF…IILG, IASF…VGFA, VQTL…LTVI, LLGI…LIIA, TAGI…VLIA, and SLVA…TSIW.

Belongs to the KdgT transporter family.

The protein localises to the cell inner membrane. The catalysed reaction is 2-dehydro-3-deoxy-D-gluconate(in) + H(+)(in) = 2-dehydro-3-deoxy-D-gluconate(out) + H(+)(out). Catalyzes the proton-dependent uptake of 2-keto-3-deoxygluconate (KDG) into the cell. The chain is 2-keto-3-deoxygluconate permease from Escherichia coli O127:H6 (strain E2348/69 / EPEC).